The sequence spans 107 residues: Probable monothiol glutaredoxin 2 (107 aa).

In terms of domain architecture, Glutaredoxin spans 7-107 (LEFIQNAIKK…LEKMLKDVVV (101 aa)). K24 serves as a coordination point for glutathione. C32 contributes to the [2Fe-2S] cluster binding site. Residues R61, F73, and 86–87 (CD) each bind glutathione.

The protein belongs to the glutaredoxin family. Monothiol subfamily.

This is Probable monothiol glutaredoxin 2 (grxC2) from Rickettsia prowazekii (strain Madrid E).